Here is a 547-residue protein sequence, read N- to C-terminus: Inositol-tetrakisphosphate 1-kinase 6 (547 aa).

Lys263 contributes to the 1D-myo-inositol 1,3,4-trisphosphate binding site. ATP-binding residues include Arg317 and Lys370. Positions Leu327–Glu539 constitute an ATP-grasp domain. 1D-myo-inositol 1,3,4-trisphosphate is bound by residues His381 and Lys415. Residues Gln404–Lys415, Ser430, and Ser450 contribute to the ATP site. The Mg(2+) site is built by Asp497, Asp511, and Asn513. 1D-myo-inositol 1,3,4-trisphosphate contacts are provided by Asn513 and Ser517.

The protein belongs to the ITPK1 family. Monomer. The cofactor is Mg(2+). Highly expressed in embryos and at lower levels in roots, leaves, flowers and anthers.

The enzyme catalyses 1D-myo-inositol 3,4,5,6-tetrakisphosphate + ATP = 1D-myo-inositol 1,3,4,5,6-pentakisphosphate + ADP + H(+). It catalyses the reaction 1D-myo-inositol 1,3,4-trisphosphate + ATP = 1D-myo-inositol 1,3,4,5-tetrakisphosphate + ADP + H(+). The catalysed reaction is 1D-myo-inositol 1,3,4-trisphosphate + ATP = 1D-myo-inositol 1,3,4,6-tetrakisphosphate + ADP + H(+). Kinase that can phosphorylate various inositol polyphosphate such as Ins(3,4,5,6)P4 or Ins(1,3,4)P3 and participates in phytic acid biosynthesis in developing seeds. Phytic acid is the primary storage form of phosphorus in cereal grains and other plant seeds. The polypeptide is Inositol-tetrakisphosphate 1-kinase 6 (ITPK6) (Oryza sativa subsp. japonica (Rice)).